The primary structure comprises 311 residues: Cbb3-type cytochrome c oxidase subunit CcoP1 (311 aa).

2 helical membrane-spanning segments follow: residues 4 to 24 and 56 to 76; these read FWSG…FWLI and RWWF…LVLY. 2 consecutive Cytochrome c domains span residues 130-209 and 220-302; these read QAVK…RKDL and ADLS…YSLS. Heme c contacts are provided by Cys143, Cys146, His147, Met186, Cys233, Cys236, His237, and Met279.

Belongs to the CcoP / FixP family. Component of the cbb3-type cytochrome c oxidase at least composed of CcoN, CcoO, CcoQ and CcoP. The cofactor is heme c.

The protein resides in the cell inner membrane. It functions in the pathway energy metabolism; oxidative phosphorylation. Its function is as follows. C-type cytochrome. Part of the cbb3-type cytochrome c oxidase complex. CcoP subunit is required for transferring electrons from donor cytochrome c via its heme groups to CcoO subunit. From there, electrons are shuttled to the catalytic binuclear center of CcoN subunit where oxygen reduction takes place. The complex also functions as a proton pump. The protein is Cbb3-type cytochrome c oxidase subunit CcoP1 of Stutzerimonas stutzeri (Pseudomonas stutzeri).